A 381-amino-acid polypeptide reads, in one-letter code: Succinyl-diaminopimelate desuccinylase (381 aa).

His72 is a binding site for Zn(2+). Asp74 is an active-site residue. Asp105 serves as a coordination point for Zn(2+). Glu139 (proton acceptor) is an active-site residue. Zn(2+) contacts are provided by Glu140, Glu168, and His354.

The protein belongs to the peptidase M20A family. DapE subfamily. In terms of assembly, homodimer. The cofactor is Zn(2+). It depends on Co(2+) as a cofactor.

The enzyme catalyses N-succinyl-(2S,6S)-2,6-diaminopimelate + H2O = (2S,6S)-2,6-diaminopimelate + succinate. The protein operates within amino-acid biosynthesis; L-lysine biosynthesis via DAP pathway; LL-2,6-diaminopimelate from (S)-tetrahydrodipicolinate (succinylase route): step 3/3. In terms of biological role, catalyzes the hydrolysis of N-succinyl-L,L-diaminopimelic acid (SDAP), forming succinate and LL-2,6-diaminopimelate (DAP), an intermediate involved in the bacterial biosynthesis of lysine and meso-diaminopimelic acid, an essential component of bacterial cell walls. In Shewanella sp. (strain MR-4), this protein is Succinyl-diaminopimelate desuccinylase.